Reading from the N-terminus, the 418-residue chain is Phosphoglycerate kinase (418 aa).

Substrate-binding positions include Asp18–Asn20, Arg34, His57–Arg60, Arg115, and Arg171. ATP-binding positions include Lys224, Gly315, Glu346, and Gly375–Ser378.

It belongs to the phosphoglycerate kinase family. In terms of assembly, monomer.

It is found in the cytoplasm. It catalyses the reaction (2R)-3-phosphoglycerate + ATP = (2R)-3-phospho-glyceroyl phosphate + ADP. The protein operates within carbohydrate degradation; glycolysis; pyruvate from D-glyceraldehyde 3-phosphate: step 2/5. In Porphyromonas gingivalis (strain ATCC BAA-308 / W83), this protein is Phosphoglycerate kinase.